Reading from the N-terminus, the 58-residue chain is uncharacterized protein (58 aa).

It is found in the plastid. Its subcellular location is the chloroplast. This is an uncharacterized protein from Porphyra purpurea (Red seaweed).